The primary structure comprises 113 residues: U11-theraphotoxin-Hhn1a (113 aa).

The signal sequence occupies residues 1–21 (MNTVRVTFLLVFVLAVSLGQA). A propeptide spanning residues 22–74 (DKDENRMEMQEKTEQGKSYLDFAENLLLQKLEELEAKLLEEDSEESRNSRQRR) is cleaved from the precursor. The segment at 61 to 83 (EEDSEESRNSRQRRCIGEGVPCD) is disordered. Cystine bridges form between cysteine 75–cysteine 90, cysteine 82–cysteine 95, and cysteine 89–cysteine 110.

It belongs to the neurotoxin 14 (magi-1) family. 01 (HNTX-16) subfamily. In terms of tissue distribution, expressed by the venom gland.

The protein localises to the secreted. In terms of biological role, probable ion channel inhibitor. In Cyriopagopus hainanus (Chinese bird spider), this protein is U11-theraphotoxin-Hhn1a.